The sequence spans 136 residues: Mini-ribonuclease 3 (136 aa).

The active site involves Asp20.

The protein belongs to the MrnC RNase family. In terms of assembly, homodimer. The cofactor is Mg(2+).

The protein resides in the cytoplasm. Its function is as follows. Involved in correct processing of both the 5' and 3' ends of 23S rRNA precursor. Processes 30S rRNA precursor transcript even in absence of ribonuclease 3 (Rnc); Rnc processes 30S rRNA into smaller rRNA precursors. The chain is Mini-ribonuclease 3 from Listeria monocytogenes serovar 1/2a (strain ATCC BAA-679 / EGD-e).